Consider the following 291-residue polypeptide: 4-diphosphocytidyl-2-C-methyl-D-erythritol kinase (291 aa).

Lys10 is an active-site residue. 99–109 contributes to the ATP binding site; sequence PMGGGLGGGSS. Residue Asp141 is part of the active site.

This sequence belongs to the GHMP kinase family. IspE subfamily. As to quaternary structure, homodimer.

It carries out the reaction 4-CDP-2-C-methyl-D-erythritol + ATP = 4-CDP-2-C-methyl-D-erythritol 2-phosphate + ADP + H(+). Its pathway is isoprenoid biosynthesis; isopentenyl diphosphate biosynthesis via DXP pathway; isopentenyl diphosphate from 1-deoxy-D-xylulose 5-phosphate: step 3/6. In terms of biological role, catalyzes the phosphorylation of the position 2 hydroxy group of 4-diphosphocytidyl-2C-methyl-D-erythritol. In Photorhabdus laumondii subsp. laumondii (strain DSM 15139 / CIP 105565 / TT01) (Photorhabdus luminescens subsp. laumondii), this protein is 4-diphosphocytidyl-2-C-methyl-D-erythritol kinase.